Reading from the N-terminus, the 134-residue chain is Putative oxidoreductase CatD (134 aa).

Helical transmembrane passes span 5-25 (FEIGTLLLRVITGIIFFVHGL), 46-66 (FMAYVIAAIELIGGVLVFFGL), 70-90 (IVGVLFALTLIGAIITVKLKA), and 91-111 (PFMGNAEFDYLLLLTSIHLAL).

It belongs to the DoxX family.

It localises to the cell membrane. Its function is as follows. Essential for growth and viability in the presence of catechol and probably involved in the detoxification of catechol. This is Putative oxidoreductase CatD (catD) from Bacillus subtilis (strain 168).